A 315-amino-acid chain; its full sequence is Probable cell division protein kinase ECU11_1290 (315 aa).

The Protein kinase domain occupies 13–294 (YEKVCRISSG…ASQGLCSGFV (282 aa)). Residues 19-27 (ISSGSFGNV) and lysine 42 contribute to the ATP site. Aspartate 138 acts as the Proton acceptor in catalysis.

Belongs to the protein kinase superfamily. CMGC Ser/Thr protein kinase family. CDC2/CDKX subfamily.

It localises to the nucleus. The catalysed reaction is L-seryl-[protein] + ATP = O-phospho-L-seryl-[protein] + ADP + H(+). It catalyses the reaction L-threonyl-[protein] + ATP = O-phospho-L-threonyl-[protein] + ADP + H(+). Functionally, may play a role in the control of the eukaryotic cell cycle. The chain is Probable cell division protein kinase ECU11_1290 from Encephalitozoon cuniculi (strain GB-M1) (Microsporidian parasite).